The sequence spans 381 residues: Putative heat shock protein HSP 90-beta 2 (381 aa).

ATP contacts are provided by Asn-46, Asp-88, and Lys-107. Positions 145-174 (KEISDGKAEEEKGEKEEENKDDEEKPKIED) are enriched in basic and acidic residues. The interval 145-192 (KEISDGKAEEEKGEKEEENKDDEEKPKIEDVGSDEEDDSGKDKKKKTK) is disordered. Ser-177 carries the phosphoserine modification. The stretch at 315 to 347 (ELPEDGEEKKRMEERKAKFENLCKFMKETLDKK) forms a coiled coil.

The protein belongs to the heat shock protein 90 family. In terms of assembly, homodimer.

Its subcellular location is the cytoplasm. Putative molecular chaperone that may promote the maturation, structural maintenance and proper regulation of specific target proteins. This is Putative heat shock protein HSP 90-beta 2 (HSP90AB2P) from Homo sapiens (Human).